The primary structure comprises 341 residues: Ribosomal RNA small subunit methyltransferase C (341 aa).

This sequence belongs to the methyltransferase superfamily. RsmC family. In terms of assembly, monomer.

The protein resides in the cytoplasm. It catalyses the reaction guanosine(1207) in 16S rRNA + S-adenosyl-L-methionine = N(2)-methylguanosine(1207) in 16S rRNA + S-adenosyl-L-homocysteine + H(+). Its function is as follows. Specifically methylates the guanine in position 1207 of 16S rRNA in the 30S particle. In Shewanella amazonensis (strain ATCC BAA-1098 / SB2B), this protein is Ribosomal RNA small subunit methyltransferase C.